We begin with the raw amino-acid sequence, 272 residues long: Ribosomal RNA small subunit methyltransferase A (272 aa).

S-adenosyl-L-methionine-binding residues include Asn-18, Leu-20, Gly-45, Glu-66, Asp-91, and Asn-113.

Belongs to the class I-like SAM-binding methyltransferase superfamily. rRNA adenine N(6)-methyltransferase family. RsmA subfamily.

The protein resides in the cytoplasm. It carries out the reaction adenosine(1518)/adenosine(1519) in 16S rRNA + 4 S-adenosyl-L-methionine = N(6)-dimethyladenosine(1518)/N(6)-dimethyladenosine(1519) in 16S rRNA + 4 S-adenosyl-L-homocysteine + 4 H(+). In terms of biological role, specifically dimethylates two adjacent adenosines (A1518 and A1519) in the loop of a conserved hairpin near the 3'-end of 16S rRNA in the 30S particle. May play a critical role in biogenesis of 30S subunits. This Serratia proteamaculans (strain 568) protein is Ribosomal RNA small subunit methyltransferase A.